A 445-amino-acid polypeptide reads, in one-letter code: MAKKYFGTDGVRGEVGQFPITPDFVLKLGYAAGQVLVQHDGGQKPTVLIGKDTRISGYMLEAALVAGFTAAGVNVIQTGPLPTPGVAYLTRALRLSAGVMISASHNVYSDNGIKFFAEGGVKLSDEIELEIEAKIDEEMKTQPSARLGRARRINGADDRYIEFCKSTFPSHLDLRGLKLVVDTAHGAGYDVAPKVFHELGAQVVSIGDEPNGYNINEKCGATHPKALQAAVLQNEADYGIALDGDGDRLMMVDRNGKVYDGDSLIYVIAKARAREGINIGGVVGTVMTNMAMEIALKEQGVDFCRAKVGDRYVLEQLNQRGWLIGGEASGHILCMDKHNTGDGIISALQVLAALQMLNQDLATICADWQPYPQTMINVRIQKGQKWQEASKDVLAEVEKELEGKGRVVLRASGTEPVVRVMVEARQADWAKKGAERIAAAITGKQ.

Ser-104 (phosphoserine intermediate) is an active-site residue. 4 residues coordinate Mg(2+): Ser-104, Asp-243, Asp-245, and Asp-247. The residue at position 104 (Ser-104) is a Phosphoserine.

Belongs to the phosphohexose mutase family. Mg(2+) is required as a cofactor. In terms of processing, activated by phosphorylation.

The catalysed reaction is alpha-D-glucosamine 1-phosphate = D-glucosamine 6-phosphate. Its function is as follows. Catalyzes the conversion of glucosamine-6-phosphate to glucosamine-1-phosphate. This is Phosphoglucosamine mutase from Neisseria subflava.